A 430-amino-acid polypeptide reads, in one-letter code: Enolase (430 aa).

Gln-167 provides a ligand contact to (2R)-2-phosphoglycerate. The active-site Proton donor is Glu-209. Positions 246, 287, and 314 each coordinate Mg(2+). 4 residues coordinate (2R)-2-phosphoglycerate: Lys-339, Arg-368, Ser-369, and Lys-390. Residue Lys-339 is the Proton acceptor of the active site.

Belongs to the enolase family. It depends on Mg(2+) as a cofactor.

The protein localises to the cytoplasm. Its subcellular location is the secreted. The protein resides in the cell surface. It catalyses the reaction (2R)-2-phosphoglycerate = phosphoenolpyruvate + H2O. Its pathway is carbohydrate degradation; glycolysis; pyruvate from D-glyceraldehyde 3-phosphate: step 4/5. Catalyzes the reversible conversion of 2-phosphoglycerate (2-PG) into phosphoenolpyruvate (PEP). It is essential for the degradation of carbohydrates via glycolysis. This is Enolase from Prochlorococcus marinus (strain AS9601).